The sequence spans 682 residues: Protein ACTIVITY OF BC1 COMPLEX KINASE 1, chloroplastic (682 aa).

The transit peptide at Met-1 to Thr-79 directs the protein to the chloroplast. The region spanning Lys-236–Phe-567 is the Protein kinase domain. Residues Ile-242–Val-250 and Lys-265 each bind ATP. Asp-400 (proton acceptor) is an active-site residue.

The protein belongs to the protein kinase superfamily. ADCK protein kinase family. In terms of assembly, interacts with ABC1K3 in plastoglobules (PG). As to expression, expressed in all tissues (e.g. especially in leaves) at all developmental stages from seed germination to flowering, except in the root tips.

It localises to the plastid. It is found in the chloroplast. The protein resides in the plastoglobule. The enzyme catalyses L-seryl-[protein] + ATP = O-phospho-L-seryl-[protein] + ADP + H(+). The catalysed reaction is L-threonyl-[protein] + ATP = O-phospho-L-threonyl-[protein] + ADP + H(+). Functionally, kinase that can phosphorylate the tocopherol cyclase VTE1, a key enzyme of tocopherol (vitamin E) metabolism and involved in the recycling of oxidated alpha-tocopherol quinone, possibly stabilizing it at plastoglobules. Also regulates plastoglobule protein composition. Prevents photodamage of chloroplasts under continuous red light, thus working in opposition to ABC1K3. Together with ABC1K1, contributes to plastoglobule (PG) function in prenyl-lipid metabolism, stress response, and thylakoid remodeling. Involved in chlorophyll degradation and in the maintenance of the number of chlorophyll-binding photosynthetic thylakoid membranes. Ensures photosynthetic electron transport by regulating the homeostasis of plastoquinone, beta-carotene and xanthophyll lutein, as well as membrane antioxidant tocopherol metabolism. Seems to affect specifically stability or turnover of D1 protein, product of psbA, one of the four core subunits of the photosystem II (PSII). Required for photooxidative stress responses, including the induction of oxidative stress response genes (e.g. FSD1, CSD1, CAT1, and UTG71C1), to prevent photosystem II core and chlorophyll degradations. The polypeptide is Protein ACTIVITY OF BC1 COMPLEX KINASE 1, chloroplastic (Arabidopsis thaliana (Mouse-ear cress)).